The following is a 125-amino-acid chain: Large ribosomal subunit protein bL17 (125 aa).

Belongs to the bacterial ribosomal protein bL17 family. Part of the 50S ribosomal subunit. Contacts protein L32.

In Acinetobacter baumannii (strain AB0057), this protein is Large ribosomal subunit protein bL17.